The chain runs to 312 residues: MTEPTFPRRPQAIFLMGPTASGKTVLAMALHQHLPVEIISVDSALIYRGMDIGTAKPGADELARAPHRLIDIRDPAEAYSAADFRRDALKEMAEITEAGRIPLLVGGTMLYFKALLEGLSPLPSADPEVRARIEREAETVGWQALHRQLQQIDPIAANRIHPNDPQRLLRALEVFFVSGNTLTELTKISGEALAYRVHQFAIVPLDRALLHQRIAQRFHQMLAAGFEHEVSTLFARGDLHREMPSIRCVGYRQMWSYLADETDYDDMVFRGICATRQLAKRQMTWLRGWHDVHWLDSDEPAALDRVLQVVSA.

17-24 (GPTASGKT) is an ATP binding site. 19 to 24 (TASGKT) is a substrate binding site. Interaction with substrate tRNA stretches follow at residues 42–45 (DSAL), 166–170 (QRLLR), and 247–252 (RCVGYR).

It belongs to the IPP transferase family. As to quaternary structure, monomer. Requires Mg(2+) as cofactor.

It catalyses the reaction adenosine(37) in tRNA + dimethylallyl diphosphate = N(6)-dimethylallyladenosine(37) in tRNA + diphosphate. In terms of biological role, catalyzes the transfer of a dimethylallyl group onto the adenine at position 37 in tRNAs that read codons beginning with uridine, leading to the formation of N6-(dimethylallyl)adenosine (i(6)A). In Sodalis glossinidius (strain morsitans), this protein is tRNA dimethylallyltransferase.